Reading from the N-terminus, the 263-residue chain is Complement control protein C3 (263 aa).

The signal sequence occupies residues 1-19 (MKVESVTFLTLLGIGCVLS). Sushi domains are found at residues 20–83 (CCTI…QCIK), 84–145 (RRCP…ICES), 146–203 (VKCQ…TCQI), and 204–263 (VKCP…KCVR). 8 cysteine pairs are disulfide-bonded: Cys21/Cys70, Cys54/Cys81, Cys86/Cys126, Cys112/Cys143, Cys148/Cys190, Cys176/Cys201, Cys206/Cys248, and Cys234/Cys261.

The protein belongs to the receptors of complement activation (RCA) family. In terms of assembly, heterodimer with A56 protein; disulfide-linked.

The protein resides in the virion membrane. It localises to the host cell membrane. Its subcellular location is the secreted. Its function is as follows. Serves to protect the virus against complement attack by inhibiting both classical and alternative pathways of complement activation. Binds C3b and C4b. The polypeptide is Complement control protein C3 (Vaccinia virus (strain Copenhagen) (VACV)).